The following is a 265-amino-acid chain: Homeobox protein CDX-1 (265 aa).

Positions 9 to 152 (KDSPVYPGPA…GGGGVSGKTR (144 aa)) are disordered. Residues 30–43 (YGPPAPPPAPPQYP) are compositionally biased toward pro residues. The segment covering 73-92 (AAAYGPGPAAPAASPASLAF) has biased composition (low complexity). Pro residues predominate over residues 93–108 (GPPPDFSPVPAPPGPG). The segment covering 110-126 (GLLAQPLGGPGTPSSPG) has biased composition (low complexity). The segment at residues 154 to 213 (KDKYRVVYTDHQRLELEKEFHYSRYITIRRKSELAANLGLTERQVKIWFQNRRAKERKVN) is a DNA-binding region (homeobox). The interval 157-178 (YRVVYTDHQRLELEKEFHYSRY) is interaction with DNA. An interaction with 5-mCpG DNA region spans residues 196–207 (RQVKIWFQNRRA). Residues 206–217 (RAKERKVNKKKQ) show a composition bias toward basic residues. The interval 206 to 265 (RAKERKVNKKKQQQQQPPQPPTAHDITATPARPSLGGLCPSNTSLLATSSPMPVKEEFLP) is disordered. Residues 245–256 (PSNTSLLATSSP) are compositionally biased toward polar residues.

It belongs to the Caudal homeobox family.

It is found in the nucleus. Its function is as follows. Plays a role in transcriptional regulation. Involved in activated KRAS-mediated transcriptional activation of PRKD1 in colorectal cancer (CRC) cells. Binds to the PRKD1 promoter in colorectal cancer (CRC) cells. Could play a role in the terminal differentiation of the intestine. Binds preferentially to methylated DNA. This is Homeobox protein CDX-1 (CDX1) from Pongo pygmaeus (Bornean orangutan).